The chain runs to 388 residues: MKTLIAAYSGVLRGERRAEAARSENKNKGSALSREGSGRWGTGSSILSALQDIFSVTWLNRSKVEKHLQVISVLQWVLSFLVLGVACSVILMYTFCTDCWLIAALYFTWLAFDWNTPKKGGRRSQWVRNWAVWRYFRDYFPIQLVKTHNLLTTRNYIFGYHPHGIMGLGAFCNFSTEATEVSKKFPGIRPYLATLAGNFRMPVLREYLMSGGICPVNRDTIDYLLSKNGSGNAIVIVVGGAAESLSSMPGKNAVTLRNRKGFVKLALRHGADLVPTYSFGENEVYKQVIFEEGSWGRWVQKKFQKYIGFAPCIFHGRGLFSSDTWGLVPYSKPITTVVGEPITVPKLEHPTQKDIDLYHTMYMEALVKLFDNHKTKFGLPETEVLEVN.

The Cytoplasmic portion of the chain corresponds to 1-69 (MKTLIAAYSG…NRSKVEKHLQ (69 aa)). A helical transmembrane segment spans residues 70 to 88 (VISVLQWVLSFLVLGVACS). Over 89 to 92 (VILM) the chain is Lumenal. Residues 93–112 (YTFCTDCWLIAALYFTWLAF) traverse the membrane as a helical segment. The Cytoplasmic segment spans residues 113 to 388 (DWNTPKKGGR…LPETEVLEVN (276 aa)).

It belongs to the diacylglycerol acyltransferase family. Forms multimeric complexes consisting of several DGAT2 subunits. Interacts with SLC27A1 and this interaction is enhanced in the presence of ZFYVE1.

Its subcellular location is the endoplasmic reticulum membrane. The protein localises to the lipid droplet. It localises to the cytoplasm. It is found in the perinuclear region. It carries out the reaction an acyl-CoA + a 1,2-diacyl-sn-glycerol = a triacyl-sn-glycerol + CoA. It catalyses the reaction all-trans-retinol + an acyl-CoA = an all-trans-retinyl ester + CoA. The enzyme catalyses 2-(9Z-octadecenoyl)-glycerol + (9Z)-octadecenoyl-CoA = 1,2-di-(9Z-octadecenoyl)-sn-glycerol + CoA. The catalysed reaction is 1,2-di-(9Z-octadecenoyl)-sn-glycerol + (9Z)-octadecenoyl-CoA = 1,2,3-tri-(9Z-octadecenoyl)-glycerol + CoA. It carries out the reaction all-trans-retinol + hexadecanoyl-CoA = all-trans-retinyl hexadecanoate + CoA. It catalyses the reaction 1-O-(9Z-octadecenyl)-glycerol + (9Z)-octadecenoyl-CoA = 1-O-(9Z-octadecyl)-3-(9Z-octadecenoyl)-glycerol + CoA. The enzyme catalyses 1-(9Z-octadecenoyl)-glycerol + (9Z)-octadecenoyl-CoA = 1,2-di-(9Z-octadecenoyl)-glycerol + CoA. The catalysed reaction is 1,2-di-(9Z-octadecenoyl)-sn-glycerol + hexadecanoyl-CoA = 1,2-di-(9Z)-octadecenoyl-3-hexadecanoyl-sn-glycerol + CoA. It carries out the reaction 1,3-di-(9Z-octadecenoyl)-glycerol + (9Z)-octadecenoyl-CoA = 1,2,3-tri-(9Z-octadecenoyl)-glycerol + CoA. It catalyses the reaction 2,3-di-(9Z)-octadecenoyl-sn-glycerol + (9Z)-octadecenoyl-CoA = 1,2,3-tri-(9Z-octadecenoyl)-glycerol + CoA. The enzyme catalyses 2-(9Z-octadecenoyl)-glycerol + hexadecanoyl-CoA = 1-hexadecanoyl-2-(9Z-octadecenoyl)-sn-glycerol + CoA. The protein operates within glycerolipid metabolism; triacylglycerol biosynthesis. With respect to regulation, inhibited by niacin. Its function is as follows. Essential acyltransferase that catalyzes the terminal and only committed step in triacylglycerol synthesis by using diacylglycerol and fatty acyl CoA as substrates. Required for synthesis and storage of intracellular triglycerides. Probably plays a central role in cytosolic lipid accumulation. In liver, is primarily responsible for incorporating endogenously synthesized fatty acids into triglycerides. Also functions as an acyl-CoA retinol acyltransferase (ARAT). Also able to use 1-monoalkylglycerol (1-MAkG) as an acyl acceptor for the synthesis of monoalkyl-monoacylglycerol (MAMAG). The chain is Diacylglycerol O-acyltransferase 2 from Rattus norvegicus (Rat).